A 259-amino-acid polypeptide reads, in one-letter code: UPF0246 protein PBPRA0561 (259 aa).

This sequence belongs to the UPF0246 family.

This chain is UPF0246 protein PBPRA0561, found in Photobacterium profundum (strain SS9).